We begin with the raw amino-acid sequence, 356 residues long: 5-formaminoimidazole-4-carboxamide-1-(beta)-D-ribofuranosyl 5'-monophosphate synthetase (356 aa).

5-amino-1-(5-phospho-beta-D-ribosyl)imidazole-4-carboxamide-binding residues include H27 and S94. An ATP-grasp domain is found at 101-333 (TENFAELTVP…YADLIQEDLS (233 aa)). Residues 145–196 (PRDI…TRYY) and E226 each bind ATP. Residue N255 coordinates 5-amino-1-(5-phospho-beta-D-ribosyl)imidazole-4-carboxamide. E293 and E306 together coordinate Mg(2+).

The protein belongs to the phosphohexose mutase family. Mg(2+) serves as cofactor. It depends on Mn(2+) as a cofactor.

The enzyme catalyses 5-amino-1-(5-phospho-beta-D-ribosyl)imidazole-4-carboxamide + formate + ATP = 5-formamido-1-(5-phospho-D-ribosyl)imidazole-4-carboxamide + ADP + phosphate. The protein operates within purine metabolism; IMP biosynthesis via de novo pathway; 5-formamido-1-(5-phospho-D-ribosyl)imidazole-4-carboxamide from 5-amino-1-(5-phospho-D-ribosyl)imidazole-4-carboxamide (formate route): step 1/1. Catalyzes the ATP- and formate-dependent formylation of 5-aminoimidazole-4-carboxamide-1-beta-d-ribofuranosyl 5'-monophosphate (AICAR) to 5-formaminoimidazole-4-carboxamide-1-beta-d-ribofuranosyl 5'-monophosphate (FAICAR) in the absence of folates. This is 5-formaminoimidazole-4-carboxamide-1-(beta)-D-ribofuranosyl 5'-monophosphate synthetase from Methanosarcina acetivorans (strain ATCC 35395 / DSM 2834 / JCM 12185 / C2A).